A 406-amino-acid chain; its full sequence is Peptidase T (406 aa).

Zn(2+) is bound at residue H78. The active site involves D80. D139 serves as a coordination point for Zn(2+). Residue E173 is the Proton acceptor of the active site. Residues E174, D196, and H378 each contribute to the Zn(2+) site.

The protein belongs to the peptidase M20B family. Requires Zn(2+) as cofactor.

The protein resides in the cytoplasm. It carries out the reaction Release of the N-terminal residue from a tripeptide.. In terms of biological role, cleaves the N-terminal amino acid of tripeptides. This chain is Peptidase T, found in Clostridium perfringens (strain 13 / Type A).